The chain runs to 126 residues: Anti-adapter protein IraD (126 aa).

The protein belongs to the GpW/Gp25 family. IraD subfamily. As to quaternary structure, interacts with RssB.

It localises to the cytoplasm. Its function is as follows. Inhibits RpoS proteolysis by regulating RssB activity, thereby increasing the stability of the sigma stress factor RpoS during oxidative stress. Its effect on RpoS stability is due to its interaction with RssB, which probably blocks the interaction of RssB with RpoS, and the consequent delivery of the RssB-RpoS complex to the ClpXP protein degradation pathway. This is Anti-adapter protein IraD from Salmonella paratyphi A (strain ATCC 9150 / SARB42).